The following is a 94-amino-acid chain: Alpha-galactosyl-binding lectin (94 aa).

In terms of assembly, homodimer. Post-translationally, contains three disulfide bonds.

Alpha-galactosyl-binding lectin with preference for galactose-alpha-1,4-galactose. In Lyophyllum decastes (Fried chicken mushroom), this protein is Alpha-galactosyl-binding lectin.